The sequence spans 375 residues: E3 ubiquitin-protein ligase RNF34 (375 aa).

The FYVE-type zinc finger occupies 56–107 (EGPNIVCKACGLSFSVFRKKHVCCDCKKDFCSVCSVLQENLRRCSTCHLLQE). One can recognise an SAP 1 domain in the interval 115–134 (LMRLKVKDLRQYLILRNIPI). Ser169 carries the post-translational modification Phosphoserine. Residues 202–250 (RTLGSGALAQEPSEIASANTEDDEDDDDDDDDDDDDDEENLEDRTPGLT) form a disordered region. Acidic residues predominate over residues 221-242 (TEDDEDDDDDDDDDDDDDEENL). Ser257 and Ser259 each carry phosphoserine. The 15-residue stretch at 267-281 (VEGMSVRQLKEILAR) folds into the SAP 2 domain. The RING-type zinc finger occupies 328–363 (CRICMDAVIDCVLLECGHMVTCTKCGKRMSECPICR).

In terms of assembly, interacts with CASP8 and CASP10. Interacts with p53/TP53; involved in p53/TP53 ubiquitination. Interacts (via RING-type zinc finger) with MDM2; the interaction stabilizes MDM2. Interacts (via RING-type zinc finger) with PPARGC1A. Interacts with NOD1. In terms of processing, autoubiquitinated (in vitro). Proteolytically cleaved by caspases upon induction of apoptosis by TNF.

It is found in the cell membrane. The protein localises to the endomembrane system. It localises to the nucleus. The protein resides in the nucleus speckle. Its subcellular location is the cytoplasm. It is found in the cytosol. It catalyses the reaction S-ubiquitinyl-[E2 ubiquitin-conjugating enzyme]-L-cysteine + [acceptor protein]-L-lysine = [E2 ubiquitin-conjugating enzyme]-L-cysteine + N(6)-ubiquitinyl-[acceptor protein]-L-lysine.. It functions in the pathway protein modification; protein ubiquitination. Its function is as follows. E3 ubiquitin-protein ligase that regulates several biological processes through the ubiquitin-mediated proteasomal degradation of various target proteins. Ubiquitinates the caspases CASP8 and CASP10, promoting their proteasomal degradation, to negatively regulate cell death downstream of death domain receptors in the extrinsic pathway of apoptosis. May mediate 'Lys-48'-linked polyubiquitination of RIPK1 and its subsequent proteasomal degradation thereby indirectly regulating the tumor necrosis factor-mediated signaling pathway. Negatively regulates p53/TP53 through its direct ubiquitination and targeting to proteasomal degradation. Indirectly, may also negatively regulate p53/TP53 through ubiquitination and degradation of SFN. Mediates PPARGC1A proteasomal degradation probably through ubiquitination thereby indirectly regulating the metabolism of brown fat cells. Possibly involved in innate immunity, through 'Lys-48'-linked polyubiquitination of NOD1 and its subsequent proteasomal degradation. The polypeptide is E3 ubiquitin-protein ligase RNF34 (RNF34) (Bos taurus (Bovine)).